The sequence spans 180 residues: Meiotic recombination protein rec15 (180 aa).

As to quaternary structure, homomer. Interacts (via C-terminus) with hop1 (via C-terminus); the interaction is direct. Interacts (via C-terminus) with rec10; the interaction is direct. Interacts with mde2; the interaction is direct.

The protein localises to the nucleus. It localises to the chromosome. Required during the early stages of meiosis for meiotic recombination. The polypeptide is Meiotic recombination protein rec15 (Schizosaccharomyces pombe (strain 972 / ATCC 24843) (Fission yeast)).